The chain runs to 528 residues: MNNSNNIFQQKRILLAVVISFLFFVIYDYFFIPKQPLKIEQNITQKNQQNTSINNTPNIQNATTNTPSAALVSQDSVISKVQSKHFEAQIDSFGRISAFYLKDRKYQNEKGEFINLVSKENSPYPLEMRFSDPSINSEAFKIPYVANASNLFVDENGSQVLKLTQNLSGLKIEKDITFYPKGNYEIEVKLSKNANYFISPGYRPNIAVDSYTVHGALVMDNKETIETYKDGDVEKDESANNVVMTSAFDRYYATFFYNFDKPLNVAISKDANQNPIVFAYSDNEFKAGGYIGSKEHVILRSIDPRLEAVVEYGWFTFIAKPMFEFLNFLHQYIGNWGWAIVVMTLIVRIILFPLTYKSMISMNKLKDLAPKMKDIRERYKGDPQKMNMHMMELYKKHGANPMSGCLPILLQIPIFFAIYRVLLNAIELKAAPWAFWIHDLSVMDPYFILPILMGATMFLQQLITPMTIQDPMQAKIMKFLPVIFTFFFITFPAGLTLYWFVNNLCSLVQQWVINKIFAKEHHKKTSGA.

5 helical membrane passes run 13 to 33, 336 to 356, 406 to 426, 446 to 466, and 481 to 501; these read ILLA…FFIP, WGWA…PLTY, LPIL…LNAI, YFIL…ITPM, and PVIF…YWFV.

This sequence belongs to the OXA1/ALB3/YidC family. Type 1 subfamily. As to quaternary structure, interacts with the Sec translocase complex via SecD. Specifically interacts with transmembrane segments of nascent integral membrane proteins during membrane integration.

It is found in the cell inner membrane. In terms of biological role, required for the insertion and/or proper folding and/or complex formation of integral membrane proteins into the membrane. Involved in integration of membrane proteins that insert both dependently and independently of the Sec translocase complex, as well as at least some lipoproteins. Aids folding of multispanning membrane proteins. This Campylobacter jejuni subsp. jejuni serotype O:2 (strain ATCC 700819 / NCTC 11168) protein is Membrane protein insertase YidC.